Reading from the N-terminus, the 607-residue chain is Matrix metalloproteinase-16 (607 aa).

Positions 1-31 are cleaved as a signal peptide; that stretch reads MILLAFSSGRRLDFVHRSGVFFFQTLLWILC. Positions 32-119 are excised as a propeptide; that stretch reads ATVCGTEQYF…SSKFNIRRKR (88 aa). N-linked (GlcNAc...) asparagine glycosylation occurs at asparagine 83. Residues 99 to 106 carry the Cysteine switch motif; it reads PRCGVPDQ. A Zn(2+)-binding site is contributed by cysteine 101. Residues 120 to 564 lie on the Extracellular side of the membrane; that stretch reads YALTGQKWQH…LDNTASTVKA (445 aa). Residue aspartate 183 participates in Ca(2+) binding. Residues histidine 193 and aspartate 195 each contribute to the Zn(2+) site. Positions 200, 201, 203, and 205 each coordinate Ca(2+). Histidine 208 provides a ligand contact to Zn(2+). Ca(2+) is bound by residues glycine 215, glycine 217, and aspartate 219. Histidine 221 provides a ligand contact to Zn(2+). Residues aspartate 223 and glutamate 226 each contribute to the Ca(2+) site. Histidine 246 contacts Zn(2+). Glutamate 247 is a catalytic residue. Zn(2+)-binding residues include histidine 250 and histidine 256. The tract at residues 281-340 is disordered; sequence DDLQGIQKIYGPPDKIPPPTRPLPTVPPHRSVPPADPRKNDRPKPPRPPTGRPSYPGAKP. The span at 294–315 shows a compositional bias: pro residues; the sequence is DKIPPPTRPLPTVPPHRSVPPA. Hemopexin repeat units follow at residues 340–388, 389–434, 436–484, and 485–532; these read PNIC…WRGL, PPSI…GNGI, PHGI…KGIP, and ESPQ…FMGC. The cysteines at positions 343 and 532 are disulfide-linked. The helical transmembrane segment at 565–585 threads the bilayer; the sequence is IAIVIPCILALCLLVLVYTVF. Topologically, residues 586–607 are cytoplasmic; the sequence is QFKRKGTPRHILYCKRSMQEWV.

Belongs to the peptidase M10A family. In terms of assembly, interacts with CSPG4 through CSPG4 chondroitin sulfate glycosaminoglycan. The cofactor is Zn(2+). Requires Ca(2+) as cofactor. The precursor is cleaved by a furin endopeptidase. In terms of tissue distribution, strongly expressed in the lung, brain and smooth muscle cells. Weakly detectable in the spleen and liver and indetectable in the heart, skeletal muscle and kidney.

The protein localises to the cell membrane. The protein resides in the secreted. It localises to the extracellular space. Its subcellular location is the extracellular matrix. Functionally, endopeptidase that degrades various components of the extracellular matrix, such as collagen type III and fibronectin. Activates progelatinase A. Involved in the matrix remodeling of blood vessels. The short isoform efficiently converts progelatinase A to the intermediate form but not to the mature one. It has no effect on type I, II, IV and V collagen. However, upon interaction with CSPG4, it may be involved in degradation and invasion of type I collagen by melanoma cells. In Rattus norvegicus (Rat), this protein is Matrix metalloproteinase-16 (Mmp16).